The following is a 544-amino-acid chain: CTP synthase (544 aa).

Residues 1–265 form an amidoligase domain region; sequence MARFIFITGG…DEAVLSAFGI (265 aa). Ser-13 contributes to the CTP binding site. Ser-13 provides a ligand contact to UTP. An ATP-binding site is contributed by 14–19; it reads SLGKGL. Tyr-54 contributes to the L-glutamine binding site. Asp-71 contacts ATP. The Mg(2+) site is built by Asp-71 and Glu-139. CTP-binding positions include 146–148, 186–191, and Lys-222; these read DIE and KTKPTQ. UTP-binding positions include 186–191 and Lys-222; that span reads KTKPTQ. The Glutamine amidotransferase type-1 domain occupies 291–543; it reads TIGVVGKYVG…IAAALQQSRL (253 aa). Position 355 (Gly-355) interacts with L-glutamine. Cys-382 functions as the Nucleophile; for glutamine hydrolysis in the catalytic mechanism. L-glutamine-binding positions include 383 to 386, Glu-406, and Arg-471; that span reads LGMQ. Residues His-516 and Glu-518 contribute to the active site.

The protein belongs to the CTP synthase family. Homotetramer.

The enzyme catalyses UTP + L-glutamine + ATP + H2O = CTP + L-glutamate + ADP + phosphate + 2 H(+). It catalyses the reaction L-glutamine + H2O = L-glutamate + NH4(+). It carries out the reaction UTP + NH4(+) + ATP = CTP + ADP + phosphate + 2 H(+). The protein operates within pyrimidine metabolism; CTP biosynthesis via de novo pathway; CTP from UDP: step 2/2. With respect to regulation, allosterically activated by GTP, when glutamine is the substrate; GTP has no effect on the reaction when ammonia is the substrate. The allosteric effector GTP functions by stabilizing the protein conformation that binds the tetrahedral intermediate(s) formed during glutamine hydrolysis. Inhibited by the product CTP, via allosteric rather than competitive inhibition. Functionally, catalyzes the ATP-dependent amination of UTP to CTP with either L-glutamine or ammonia as the source of nitrogen. Regulates intracellular CTP levels through interactions with the four ribonucleotide triphosphates. The chain is CTP synthase from Rhizorhabdus wittichii (strain DSM 6014 / CCUG 31198 / JCM 15750 / NBRC 105917 / EY 4224 / RW1) (Sphingomonas wittichii).